The sequence spans 397 residues: Tryptophan synthase beta chain (397 aa).

The residue at position 91 (Lys91) is an N6-(pyridoxal phosphate)lysine.

It belongs to the TrpB family. Tetramer of two alpha and two beta chains. The cofactor is pyridoxal 5'-phosphate.

The enzyme catalyses (1S,2R)-1-C-(indol-3-yl)glycerol 3-phosphate + L-serine = D-glyceraldehyde 3-phosphate + L-tryptophan + H2O. The protein operates within amino-acid biosynthesis; L-tryptophan biosynthesis; L-tryptophan from chorismate: step 5/5. Its function is as follows. The beta subunit is responsible for the synthesis of L-tryptophan from indole and L-serine. The chain is Tryptophan synthase beta chain from Bacillus thuringiensis (strain Al Hakam).